A 327-amino-acid chain; its full sequence is Malate dehydrogenase (327 aa).

G11 to S17 contributes to the NAD(+) binding site. The substrate site is built by R92 and R98. Residues N105, Q112, and V129–N131 each bind NAD(+). Residues N131 and R162 each contribute to the substrate site. H187 acts as the Proton acceptor in catalysis.

Belongs to the LDH/MDH superfamily. MDH type 2 family.

It carries out the reaction (S)-malate + NAD(+) = oxaloacetate + NADH + H(+). Its function is as follows. Catalyzes the reversible oxidation of malate to oxaloacetate. This is Malate dehydrogenase from Cellvibrio japonicus (strain Ueda107) (Pseudomonas fluorescens subsp. cellulosa).